The primary structure comprises 388 residues: Succinate--CoA ligase [ADP-forming] subunit beta (388 aa).

In terms of domain architecture, ATP-grasp spans 9 to 244 (KEILRKFGVA…LDEEDPAEIE (236 aa)). ATP contacts are provided by residues Lys-46, 53–55 (GRG), Glu-99, Ala-102, and Glu-107. The Mg(2+) site is built by Asn-199 and Asp-213. Substrate contacts are provided by residues Asn-264 and 321 to 323 (GIM).

It belongs to the succinate/malate CoA ligase beta subunit family. Heterotetramer of two alpha and two beta subunits. The cofactor is Mg(2+).

The catalysed reaction is succinate + ATP + CoA = succinyl-CoA + ADP + phosphate. The enzyme catalyses GTP + succinate + CoA = succinyl-CoA + GDP + phosphate. It functions in the pathway carbohydrate metabolism; tricarboxylic acid cycle; succinate from succinyl-CoA (ligase route): step 1/1. Succinyl-CoA synthetase functions in the citric acid cycle (TCA), coupling the hydrolysis of succinyl-CoA to the synthesis of either ATP or GTP and thus represents the only step of substrate-level phosphorylation in the TCA. The beta subunit provides nucleotide specificity of the enzyme and binds the substrate succinate, while the binding sites for coenzyme A and phosphate are found in the alpha subunit. The polypeptide is Succinate--CoA ligase [ADP-forming] subunit beta (Burkholderia cenocepacia (strain ATCC BAA-245 / DSM 16553 / LMG 16656 / NCTC 13227 / J2315 / CF5610) (Burkholderia cepacia (strain J2315))).